The sequence spans 482 residues: tRNA sulfurtransferase (482 aa).

Residues 61 to 165 enclose the THUMP domain; the sequence is LAIRDALTRI…DDRLLLIKGR (105 aa). Residues 183-184, Lys265, Gly287, and Gln296 each bind ATP; that span reads LI. Cys344 and Cys456 are oxidised to a cystine. Residues 404 to 482 form the Rhodanese domain; sequence FGANDVILDI…GFANVKVYRP (79 aa). Residue Cys456 is the Cysteine persulfide intermediate of the active site.

The protein belongs to the ThiI family.

It is found in the cytoplasm. The catalysed reaction is [ThiI sulfur-carrier protein]-S-sulfanyl-L-cysteine + a uridine in tRNA + 2 reduced [2Fe-2S]-[ferredoxin] + ATP + H(+) = [ThiI sulfur-carrier protein]-L-cysteine + a 4-thiouridine in tRNA + 2 oxidized [2Fe-2S]-[ferredoxin] + AMP + diphosphate. It carries out the reaction [ThiS sulfur-carrier protein]-C-terminal Gly-Gly-AMP + S-sulfanyl-L-cysteinyl-[cysteine desulfurase] + AH2 = [ThiS sulfur-carrier protein]-C-terminal-Gly-aminoethanethioate + L-cysteinyl-[cysteine desulfurase] + A + AMP + 2 H(+). It participates in cofactor biosynthesis; thiamine diphosphate biosynthesis. Its function is as follows. Catalyzes the ATP-dependent transfer of a sulfur to tRNA to produce 4-thiouridine in position 8 of tRNAs, which functions as a near-UV photosensor. Also catalyzes the transfer of sulfur to the sulfur carrier protein ThiS, forming ThiS-thiocarboxylate. This is a step in the synthesis of thiazole, in the thiamine biosynthesis pathway. The sulfur is donated as persulfide by IscS. The protein is tRNA sulfurtransferase of Salmonella paratyphi B (strain ATCC BAA-1250 / SPB7).